The primary structure comprises 442 residues: O-acetyl-L-homoserine sulfhydrylase (442 aa).

Positions 1–32 (MVGPSGESMPRNFKPETIALHGGQEPDPTTTS) are disordered. Lys-216 carries the post-translational modification N6-(pyridoxal phosphate)lysine.

This sequence belongs to the trans-sulfuration enzymes family. Requires pyridoxal 5'-phosphate as cofactor.

The enzyme catalyses O-acetyl-L-homoserine + hydrogen sulfide = L-homocysteine + acetate. It functions in the pathway amino-acid biosynthesis; L-methionine biosynthesis via de novo pathway; L-homocysteine from O-acetyl-L-homoserine: step 1/1. Feedback inhibited at very high concentrations of methionine or S-adenosylmethionine. Functionally, catalyzes the conversion of O-acetyl-L-homoserine (OAH) into homocysteine in the methionine biosynthesis pathway. Can also use O-succinyl-homoserine (OSH), although at low efficiency. This Leptospira meyeri protein is O-acetyl-L-homoserine sulfhydrylase.